The sequence spans 159 residues: MNKSCIYPGTFDPITNGHMDVIKRACRVFDNVIVAVALNESKTPYFCYEERISLAKTATKDIPKVSVIGFDNLLVDLAKSKGINTVVRGLRAVSDFEYELQIGYANASLWSEFETVYFMPSLKNAFISSSIVRSVLKHGGDIGSLVPTNVLEEIKGKLC.

Residue Thr-10 coordinates substrate. Residues 10-11 (TF) and His-18 each bind ATP. The substrate site is built by Lys-42, Leu-74, and Arg-88. ATP contacts are provided by residues 89–91 (GLR), Glu-99, and 124–130 (NAFISSS).

This sequence belongs to the bacterial CoaD family. In terms of assembly, homohexamer. It depends on Mg(2+) as a cofactor.

The protein localises to the cytoplasm. It catalyses the reaction (R)-4'-phosphopantetheine + ATP + H(+) = 3'-dephospho-CoA + diphosphate. Its pathway is cofactor biosynthesis; coenzyme A biosynthesis; CoA from (R)-pantothenate: step 4/5. In terms of biological role, reversibly transfers an adenylyl group from ATP to 4'-phosphopantetheine, yielding dephospho-CoA (dPCoA) and pyrophosphate. This Campylobacter fetus subsp. fetus (strain 82-40) protein is Phosphopantetheine adenylyltransferase.